The primary structure comprises 430 residues: Probable sugar isomerase mlr5709 (430 aa).

Positions 257, 289, and 291 each coordinate Mn(2+).

Belongs to the rhamnose isomerase family. Requires Mn(2+) as cofactor.

The polypeptide is Probable sugar isomerase mlr5709 (Mesorhizobium japonicum (strain LMG 29417 / CECT 9101 / MAFF 303099) (Mesorhizobium loti (strain MAFF 303099))).